The chain runs to 191 residues: Putative glutathione-dependent formaldehyde-activating enzyme (191 aa).

The CENP-V/GFA domain maps to 20 to 166 (FAGGNLYCKC…FKAVGLETYD (147 aa)). Zn(2+) contacts are provided by Cys-27, Cys-29, Cys-48, Cys-50, Cys-53, Cys-95, and Cys-98.

Belongs to the Gfa family. Zn(2+) is required as a cofactor.

The catalysed reaction is S-(hydroxymethyl)glutathione = glutathione + formaldehyde. It functions in the pathway one-carbon metabolism; formaldehyde degradation; formate from formaldehyde (glutathione route): step 1/3. In terms of biological role, catalyzes the condensation of formaldehyde and glutathione to S-hydroxymethylglutathione. The protein is Putative glutathione-dependent formaldehyde-activating enzyme of Aspergillus terreus (strain NIH 2624 / FGSC A1156).